The primary structure comprises 484 residues: Ribosome biogenesis protein NOP53 (484 aa).

2 disordered regions span residues 1-51 and 304-356; these read MAAG…WRRL and ESDG…AARK. The residue at position 2 (A2) is an N-acetylalanine. Residue S29 is modified to Phosphoserine. A compositionally biased stretch (basic residues) spans 35-49; sequence RRRRRGPRNKKRGWR. The tract at residues 148 to 437 is mediates interaction with CDKN2A/isoform tumor suppressor ARF; it reads KEELWEKLAK…SELSGSLRTL (290 aa). S305 bears the Phosphoserine mark. Residues 336–348 are compositionally biased toward basic and acidic residues; sequence PEKRMEKKTEQQR. The interval 348–392 is mediates interaction with human herpesvirus 8 protein ORF16; that stretch reads RRREKAARKLRVQQAALRAARLQHQELFRLRGIKAQVARRLAELA. Nucleolar localization signal stretches follow at residues 353-401 and 402-484; these read AARK…RRIR and RLAE…EIQL.

The protein belongs to the NOP53 family. Homooligomer. Interacts with PTEN; regulates PTEN phosphorylation and increases its stability. Interacts with RPL11; retains RPL11 into the nucleolus. Interacts with CDKN2A/isoform tumor suppressor ARF; the interaction is direct and promotes ARF nucleoplasmic relocalization and ubiquitin-mediated proteasomal degradation. Interacts with NPM1; the interaction is direct and competitive with MYC. Interacts with NF2 (via FERM domain); the interaction is direct. Interacts with p53/TP53 (via the oligomerization region); the interaction is direct and may prevent the MDM2-mediated proteasomal degradation of p53/TP53. Interacts with RIGI; may regulate RIGI through USP15-mediated 'Lys-63'-linked deubiquitination. Interacts with UBTF. Post-translationally, ubiquitin-mediated proteasomal degradation is regulated by c-JUN. It is associated with relocalization to the nucleoplasm and decreased homooligomerization. In terms of processing, phosphorylated upon DNA damage probably by ATM and DNA-PK; may regulate NOP53 degradation.

It is found in the nucleus. It localises to the nucleolus. Its subcellular location is the nucleoplasm. Functionally, nucleolar protein which is involved in the integration of the 5S RNP into the ribosomal large subunit during ribosome biogenesis. In ribosome biogenesis, may also play a role in rRNA transcription. Also functions as a nucleolar sensor that regulates the activation of p53/TP53 in response to ribosome biogenesis perturbation, DNA damage and other stress conditions. DNA damage or perturbation of ribosome biogenesis disrupt the interaction between NOP53 and RPL11 allowing RPL11 transport to the nucleoplasm where it can inhibit MDM2 and allow p53/TP53 activation. It may also positively regulate the function of p53/TP53 in cell cycle arrest and apoptosis through direct interaction, preventing its MDM2-dependent ubiquitin-mediated proteasomal degradation. Originally identified as a tumor suppressor, it may also play a role in cell proliferation and apoptosis by positively regulating the stability of PTEN, thereby antagonizing the PI3K-AKT/PKB signaling pathway. May also inhibit cell proliferation and increase apoptosis through its interaction with NF2. May negatively regulate NPM1 by regulating its nucleoplasmic localization, oligomerization and ubiquitin-mediated proteasomal degradation. Thereby, may prevent NPM1 interaction with MYC and negatively regulate transcription mediated by the MYC-NPM1 complex. May also regulate cellular aerobic respiration. In the cellular response to viral infection, may play a role in the attenuation of interferon-beta through the inhibition of RIGI. This Mus musculus (Mouse) protein is Ribosome biogenesis protein NOP53.